Here is a 305-residue protein sequence, read N- to C-terminus: UDP-N-acetylenolpyruvoylglucosamine reductase (305 aa).

The FAD-binding PCMH-type domain maps to 35 to 214 (VGGPAQALFT…RARMNEVQAH (180 aa)). The active site involves Arg179. Residue Ser228 is the Proton donor of the active site. The active site involves Glu298.

It belongs to the MurB family. FAD is required as a cofactor.

The protein resides in the cytoplasm. It catalyses the reaction UDP-N-acetyl-alpha-D-muramate + NADP(+) = UDP-N-acetyl-3-O-(1-carboxyvinyl)-alpha-D-glucosamine + NADPH + H(+). Its pathway is cell wall biogenesis; peptidoglycan biosynthesis. Its function is as follows. Cell wall formation. The sequence is that of UDP-N-acetylenolpyruvoylglucosamine reductase from Nitrobacter winogradskyi (strain ATCC 25391 / DSM 10237 / CIP 104748 / NCIMB 11846 / Nb-255).